Reading from the N-terminus, the 173-residue chain is C-phycocyanin beta subunit (173 aa).

An N4-methylasparagine modification is found at asparagine 73. (2R,3E)-phycocyanobilin contacts are provided by cysteine 83 and cysteine 154.

Belongs to the phycobiliprotein family. As to quaternary structure, heterodimer of an alpha and a beta subunit, which further assembles into trimers and the trimers into hexamers. In terms of processing, contains two covalently linked bilin chromophores.

It is found in the cellular thylakoid membrane. Its function is as follows. Light-harvesting photosynthetic bile pigment-protein from the phycobiliprotein complex (phycobilisome, PBS). Phycocyanin is the major phycobiliprotein in the PBS rod. The chain is C-phycocyanin beta subunit (cpcB1) from Synechococcus elongatus (strain ATCC 33912 / PCC 7942 / FACHB-805) (Anacystis nidulans R2).